A 521-amino-acid polypeptide reads, in one-letter code: Probable feruloyl esterase B (521 aa).

An N-terminal signal peptide occupies residues 1 to 17 (MKVSSLLSVALPGAALA). Intrachain disulfides connect Cys-26-Cys-72 and Cys-61-Cys-111. Asn-37, Asn-51, Asn-77, Asn-95, Asn-144, and Asn-177 each carry an N-linked (GlcNAc...) asparagine glycan. 3 cysteine pairs are disulfide-bonded: Cys-184–Cys-438, Cys-253–Cys-270, and Cys-279–Cys-288. Ser-185 (acyl-ester intermediate) is an active-site residue. Ca(2+)-binding residues include Asp-254, Asp-257, Ala-259, Asp-261, and Ile-263. Asn-284, Asn-347, Asn-352, and Asn-378 each carry an N-linked (GlcNAc...) asparagine glycan. Residues Asp-397 and His-437 each act as charge relay system in the active site. N-linked (GlcNAc...) asparagine glycans are attached at residues Asn-488 and Asn-511. The cysteines at positions 498 and 520 are disulfide-linked.

The protein belongs to the tannase family.

The protein resides in the secreted. It catalyses the reaction feruloyl-polysaccharide + H2O = ferulate + polysaccharide.. Functionally, involved in degradation of plant cell walls. Hydrolyzes the feruloyl-arabinose ester bond in arabinoxylans as well as the feruloyl-galactose and feruloyl-arabinose ester bonds in pectin. The chain is Probable feruloyl esterase B (faeB) from Aspergillus niger (strain ATCC MYA-4892 / CBS 513.88 / FGSC A1513).